The primary structure comprises 252 residues: Cell division protein ZapD (252 aa).

The protein belongs to the ZapD family. In terms of assembly, interacts with FtsZ.

Its subcellular location is the cytoplasm. Its function is as follows. Cell division factor that enhances FtsZ-ring assembly. Directly interacts with FtsZ and promotes bundling of FtsZ protofilaments, with a reduction in FtsZ GTPase activity. This is Cell division protein ZapD from Ralstonia nicotianae (strain ATCC BAA-1114 / GMI1000) (Ralstonia solanacearum).